Here is a 281-residue protein sequence, read N- to C-terminus: Aquaporin-9 (281 aa).

The Cytoplasmic segment spans residues 1 to 17 (MGAFVNTKVYIENKNIR). A helical transmembrane segment spans residues 18-36 (DWLSEALSMFMYMSLLLGS). The Extracellular portion of the chain corresponds to 37 to 50 (AATGHFSGREDDAL). Residues 51–69 (FGVIFQGFSITFGIYIGGA) form a helical membrane-spanning segment. Over 70–71 (MS) the chain is Cytoplasmic. The segment at residues 72–84 (GAIINPALTLAVA) is an intramembrane region (discontinuously helical). The short motif at 76–78 (NPA) is the NPA 1 element. The Cytoplasmic segment spans residues 85 to 90 (LLGKIS). Residues 91-115 (WRKCIVLQSAQYIGSFIASAVVYLI) form a helical membrane-spanning segment. The Extracellular portion of the chain corresponds to 116-157 (YNDSLDAFGAGANFTATEPGVFRKDVAGIWSTFPKTYLKERG). Asparagine 117 and asparagine 128 each carry an N-linked (GlcNAc...) asparagine glycan. Residues 158 to 175 (AIFNQIFCSMLLTFGFLA) traverse the membrane as a helical segment. Topologically, residues 176 to 187 (ISDYKNFRPSKG) are cytoplasmic. A helical membrane pass occupies residues 188-204 (LFPIAVGLLVMTVFLAF). The Extracellular portion of the chain corresponds to 205–207 (SYS). An intramembrane region (discontinuously helical) is located at residues 208-222 (TGAAMNPARDFSPRL). The NPA 2 motif lies at 213-215 (NPA). Topologically, residues 223 to 241 (WSLIIGYGIEVFSYNQYEW) are extracellular. A helical membrane pass occupies residues 242 to 262 (FWIPWLMPYVGAMLGALIYQL). Residues 263 to 281 (LIGAQWSKGQKGESKHKDP) are Cytoplasmic-facing.

The protein belongs to the MIP/aquaporin (TC 1.A.8) family.

The protein localises to the cell membrane. The enzyme catalyses H2O(in) = H2O(out). In terms of biological role, aquaglyceroporin that may modulate the water content and osmolytes during anhydrobiosis. The protein is Aquaporin-9 of Milnesium tardigradum (Water bear).